Consider the following 450-residue polypeptide: Chromosomal replication initiator protein DnaA (450 aa).

Residues 1-79 (MENIHDLWNR…TGEELLIKFI (79 aa)) form a domain I, interacts with DnaA modulators region. A domain II region spans residues 79 to 111 (ITPPNQSEDDFEFQRSSKKHRKPYEESTDFPQS). Residues 112-328 (MLNPKYTFDT…GALIRVVAYS (217 aa)) form a domain III, AAA+ region region. Glycine 156, glycine 158, lysine 159, and threonine 160 together coordinate ATP. The interval 329-450 (SLINKEITAD…KEIEEKLKQL (122 aa)) is domain IV, binds dsDNA.

Belongs to the DnaA family. As to quaternary structure, oligomerizes as a right-handed, spiral filament on DNA at oriC.

Its subcellular location is the cytoplasm. In terms of biological role, plays an essential role in the initiation and regulation of chromosomal replication. ATP-DnaA binds to the origin of replication (oriC) to initiate formation of the DNA replication initiation complex once per cell cycle. Binds the DnaA box (a 9 base pair repeat at the origin) and separates the double-stranded (ds)DNA. Forms a right-handed helical filament on oriC DNA; dsDNA binds to the exterior of the filament while single-stranded (ss)DNA is stabiized in the filament's interior. The ATP-DnaA-oriC complex binds and stabilizes one strand of the AT-rich DNA unwinding element (DUE), permitting loading of DNA polymerase. After initiation quickly degrades to an ADP-DnaA complex that is not apt for DNA replication. Binds acidic phospholipids. The chain is Chromosomal replication initiator protein DnaA from Geobacillus sp. (strain WCH70).